An 860-amino-acid chain; its full sequence is Leucine-rich repeat and death domain-containing protein 1 (860 aa).

Positions 1-103 (MSEKEGMSEV…TGTSQSLSSL (103 aa)) are disordered. A compositionally biased stretch (polar residues) spans 50-72 (KSSNQIYETHPRQNTLESTSSSG). The span at 90 to 103 (TSTRTGTSQSLSSL) shows a compositional bias: low complexity. LRR repeat units follow at residues 139–163 (LGAD…ILKI), 164–186 (KYVK…DSGD), 187–210 (LLGL…IQLL), 211–233 (HNLR…ISQL), 235–256 (NIRQ…LECL), 257–279 (GNLE…LPSL), 281–302 (TLRV…LCFL), 303–325 (PKLI…IREL), 326–348 (KNLE…IFQL), 350–371 (KIKE…IENF), 372–394 (RELR…ISCC), 396–417 (MLEC…IHKL), 419–440 (NLRK…ISHL), 441–463 (NNIC…IKNC), 465–486 (KIIK…LCAL), 487–510 (DSLY…SFSK), 512–532 (LLHL…FCSL), 533–555 (INLK…ISNM), 557–578 (SLHV…LCTL), 579–601 (ENLQ…ICNL), 603–624 (GIQK…LCQL), 627–650 (LEQL…LSNM), 651–673 (TQLK…IGEL), 675–696 (NLVS…LLSL), 697–719 (NDLQ…IYNI), and 721–742 (SLKE…ICKG). Residues 764–852 (EKIFKIVANN…EIMDKITALN (89 aa)) form the Death domain. Residues 856–860 (RAIKF) form an LRR 27 repeat.

This Homo sapiens (Human) protein is Leucine-rich repeat and death domain-containing protein 1 (LRRD1).